Consider the following 418-residue polypeptide: NADH-quinone oxidoreductase subunit D (418 aa).

This sequence belongs to the complex I 49 kDa subunit family. As to quaternary structure, NDH-1 is composed of 14 different subunits. Subunits NuoB, C, D, E, F, and G constitute the peripheral sector of the complex.

The protein resides in the cell inner membrane. The catalysed reaction is a quinone + NADH + 5 H(+)(in) = a quinol + NAD(+) + 4 H(+)(out). NDH-1 shuttles electrons from NADH, via FMN and iron-sulfur (Fe-S) centers, to quinones in the respiratory chain. The immediate electron acceptor for the enzyme in this species is believed to be ubiquinone. Couples the redox reaction to proton translocation (for every two electrons transferred, four hydrogen ions are translocated across the cytoplasmic membrane), and thus conserves the redox energy in a proton gradient. This chain is NADH-quinone oxidoreductase subunit D, found in Bordetella pertussis (strain Tohama I / ATCC BAA-589 / NCTC 13251).